We begin with the raw amino-acid sequence, 168 residues long: Cell division inhibitor SulA (168 aa).

The interval 105–111 is ftsZ binding; that stretch reads ALETGNY. The tract at residues 161–168 is lon protease binding; the sequence is RIHSGMVH.

Belongs to the SulA family. Interacts with FtsZ. Post-translationally, is rapidly cleaved and degraded by the Lon protease once DNA damage is repaired.

In terms of biological role, component of the SOS system and an inhibitor of cell division. Accumulation of SulA causes rapid cessation of cell division and the appearance of long, non-septate filaments. In the presence of GTP, binds a polymerization-competent form of FtsZ in a 1:1 ratio, thus inhibiting FtsZ polymerization and therefore preventing it from participating in the assembly of the Z ring. This mechanism prevents the premature segregation of damaged DNA to daughter cells during cell division. This is Cell division inhibitor SulA from Cronobacter sakazakii (strain ATCC BAA-894) (Enterobacter sakazakii).